The primary structure comprises 124 residues: Ragulator complex protein LAMTOR3 (124 aa).

Positions 57–70 (TDQGSKLGLSKNKS) are required for interaction with LAMTOR2.

Belongs to the LAMTOR3 family. In terms of assembly, part of the Ragulator complex composed of LAMTOR1, LAMTOR2, LAMTOR3, LAMTOR4 and LAMTOR5. LAMTOR4 and LAMTOR5 form a heterodimer that interacts, through LAMTOR1, with a LAMTOR2, LAMTOR3 heterodimer. The Ragulator complex interacts with both the mTORC1 complex and heterodimers constituted of the Rag GTPases RagA/RRAGA, RagB/RRAGB, RagC/RRAGC and RagD/RRAGD; regulated by amino acid availability. The Ragulator complex interacts with SLC38A9; the probable amino acid sensor. Interacts with LAMTOR1 and LAMTOR2; the interaction is direct. Component of the lysosomal folliculin complex (LFC), composed of FLCN, FNIP1 (or FNIP2), RagA/RRAGA or RagB/RRAGB GDP-bound, RagC/RRAGC or RagD/RRAGD GTP-bound, and Ragulator. Interacts with MAP2K1/MEK1 and MAPK2. Interacts with MORG1.

It is found in the late endosome membrane. As part of the Ragulator complex it is involved in amino acid sensing and activation of mTORC1, a signaling complex promoting cell growth in response to growth factors, energy levels, and amino acids. Activated by amino acids through a mechanism involving the lysosomal V-ATPase, the Ragulator plays a dual role for the small GTPases Rag (RagA/RRAGA, RagB/RRAGB, RagC/RRAGC and/or RagD/RRAGD): it (1) acts as a guanine nucleotide exchange factor (GEF), activating the small GTPases Rag and (2) mediates recruitment of Rag GTPases to the lysosome membrane. Activated Ragulator and Rag GTPases function as a scaffold recruiting mTORC1 to lysosomes where it is in turn activated. Adapter protein that enhances the efficiency of the MAP kinase cascade facilitating the activation of MAPK2. The polypeptide is Ragulator complex protein LAMTOR3 (Lamtor3) (Mus musculus (Mouse)).